Reading from the N-terminus, the 482-residue chain is NADH-quinone oxidoreductase subunit D (482 aa).

The span at 1–16 (MTTNTSTSSTTDDLTT) shows a compositional bias: low complexity. Positions 1 to 48 (MTTNTSTSSTTDDLTTGAPNGTGAPDGANGVGGPTGTVGGPGEHPAYE) are disordered. The span at 29–42 (NGVGGPTGTVGGPG) shows a compositional bias: gly residues.

The protein belongs to the complex I 49 kDa subunit family. NDH-1 is composed of 14 different subunits. Subunits NuoB, C, D, E, F, and G constitute the peripheral sector of the complex.

Its subcellular location is the cell membrane. The enzyme catalyses a quinone + NADH + 5 H(+)(in) = a quinol + NAD(+) + 4 H(+)(out). NDH-1 shuttles electrons from NADH, via FMN and iron-sulfur (Fe-S) centers, to quinones in the respiratory chain. The immediate electron acceptor for the enzyme in this species is believed to be a menaquinone. Couples the redox reaction to proton translocation (for every two electrons transferred, four hydrogen ions are translocated across the cytoplasmic membrane), and thus conserves the redox energy in a proton gradient. The polypeptide is NADH-quinone oxidoreductase subunit D (Frankia casuarinae (strain DSM 45818 / CECT 9043 / HFP020203 / CcI3)).